Here is a 176-residue protein sequence, read N- to C-terminus: Probable DNA-directed RNA polymerase subunit delta (176 aa).

An HTH HARE-type domain is found at 14–81; that stretch reads CSMIEVVHSV…GENRWGLRSW (68 aa). A disordered region spans residues 90 to 176; it reads EILPQPKPKK…ETEEEEEEEL (87 aa). Over residues 106–176 the composition is skewed to acidic residues; sequence DGFDDYIEED…ETEEEEEEEL (71 aa).

It belongs to the RpoE family. In terms of assembly, RNAP is composed of a core of 2 alpha, a beta and a beta' subunits. The core is associated with a delta subunit and one of several sigma factors.

Functionally, participates in both the initiation and recycling phases of transcription. In the presence of the delta subunit, RNAP displays an increased specificity of transcription, a decreased affinity for nucleic acids, and an increased efficiency of RNA synthesis because of enhanced recycling. This Bacillus thuringiensis subsp. konkukian (strain 97-27) protein is Probable DNA-directed RNA polymerase subunit delta.